Reading from the N-terminus, the 242-residue chain is MTTVSMRDMLQAGVHFGHQTRYWNPKMKPFIFGARNGVHIINLEHTVPMFNEALAFISNVASKKGKILFVGTKRAASEAIKEAAVSCDQYYVDHRWLGGMLTNWKTVRQSIKRLKELETQSVDGTFDKLTKKEALMRTRELEKLEKSLGGIKNMGGLPDALFVIGADHEHIAIKEANNLGIPVVAVVDTNASPDGVNYIVPGNDDAMRAIRLYTEAAATAAKAGRGQDLAVQAEQDGFVEAE.

The protein belongs to the universal ribosomal protein uS2 family.

In Shewanella amazonensis (strain ATCC BAA-1098 / SB2B), this protein is Small ribosomal subunit protein uS2.